Reading from the N-terminus, the 226-residue chain is Protein FMP52-1, mitochondrial (226 aa).

The transit peptide at 1–43 (MSAFVLGSTGLVGLQILKVLDSSTAFKKVSTVSRRLPSVTSGK) directs the protein to the mitochondrion.

The protein belongs to the FMP52 family.

The protein localises to the mitochondrion outer membrane. The chain is Protein FMP52-1, mitochondrial (FMP521) from Scheffersomyces stipitis (strain ATCC 58785 / CBS 6054 / NBRC 10063 / NRRL Y-11545) (Yeast).